Reading from the N-terminus, the 82-residue chain is Protein Rv1078A (82 aa).

Residues 35 to 54 (GGPTRRLRRRPAVTRRRRPD) show a composition bias toward basic residues. Positions 35-82 (GGPTRRLRRRPAVTRRRRPDRRFVRCRPSPTRRGLPGCWRHSSTGPHT) are disordered.

The protein resides in the cytoplasm. The protein is Protein Rv1078A of Mycobacterium tuberculosis (strain ATCC 25618 / H37Rv).